Consider the following 1117-residue polypeptide: Cytospin-A (1117 aa).

3 disordered regions span residues 1 to 176 (MKKA…NQIS), 293 to 323 (SLSPEITPGNQSDGGGTLTSSVEGSAPGSVE), and 358 to 390 (SSDDALDAPSSSESEGIPSIERSRKGSSGNASE). Residues 45–90 (TAASLSKTKSSDDLLAGMAGGVTVTNGVKGKKSTCPSAAPSASAPA) show a composition bias toward low complexity. Over residues 93 to 117 (TVENKSKISTGTASSTKRSTSTGNK) the composition is skewed to polar residues. Basic and acidic residues-rich tracts occupy residues 120–131 (SSTRERLRERTR) and 158–171 (TATECDVRMSKSKS). A coiled-coil region spans residues 168–280 (KSKSDNQISD…LNALGFSLEQ (113 aa)). The span at 293–303 (SLSPEITPGNQ) shows a compositional bias: polar residues. Positions 358–377 (SSDDALDAPSSSESEGIPSI) are enriched in low complexity. Phosphoserine occurs at positions 384, 385, and 389. Coiled coils occupy residues 394 to 449 (ACLT…MESL) and 487 to 807 (RYME…RGRV). Phosphoserine is present on residues Ser868, Ser881, and Ser887. The interval 920–997 (TSSASRPASL…PTTRSRIREE (78 aa)) is disordered. The segment covering 946–956 (RSSEEVKRDIS) has biased composition (basic and acidic residues). Over residues 971-990 (TTSPQLSLSSSPTASVTPTT) the composition is skewed to low complexity. Positions 1011 to 1116 (GSKRNALLKW…YVTAIYKYFE (106 aa)) constitute a Calponin-homology (CH) domain.

This sequence belongs to the cytospin-A family. May interact with both microtubules and actin cytoskeleton.

It is found in the cytoplasm. The protein resides in the cytoskeleton. The protein localises to the spindle. Its subcellular location is the cell junction. It localises to the gap junction. In terms of biological role, involved in cytokinesis and spindle organization. May play a role in actin cytoskeleton organization and microtubule stabilization and hence required for proper cell adhesion and migration. This Homo sapiens (Human) protein is Cytospin-A (SPECC1L).